Here is a 130-residue protein sequence, read N- to C-terminus: MKKREDMTEMQVHVCLNQGTEYPFTGKLLDQQKKGLYRCVVCHSPLFVSDTKFDAGCGWPSFFQAISPEAIRYLDDYTLSRPRTEIRCGQCDAHLGHVFEDGPPPTGLRYCVNSVSMAFEDSETGELIEG.

The region spanning 1 to 122 (MKKREDMTEM…NSVSMAFEDS (122 aa)) is the MsrB domain. Zn(2+) is bound by residues cysteine 39, cysteine 42, cysteine 88, and cysteine 91. Cysteine 111 serves as the catalytic Nucleophile.

This sequence belongs to the MsrB Met sulfoxide reductase family. Zn(2+) is required as a cofactor.

It carries out the reaction L-methionyl-[protein] + [thioredoxin]-disulfide + H2O = L-methionyl-(R)-S-oxide-[protein] + [thioredoxin]-dithiol. This chain is Peptide methionine sulfoxide reductase MsrB, found in Pasteurella multocida (strain Pm70).